We begin with the raw amino-acid sequence, 1375 residues long: DNA-directed RNA polymerase subunit beta (1375 aa).

This sequence belongs to the RNA polymerase beta chain family. The RNAP catalytic core consists of 2 alpha, 1 beta, 1 beta' and 1 omega subunit. When a sigma factor is associated with the core the holoenzyme is formed, which can initiate transcription.

The enzyme catalyses RNA(n) + a ribonucleoside 5'-triphosphate = RNA(n+1) + diphosphate. Its function is as follows. DNA-dependent RNA polymerase catalyzes the transcription of DNA into RNA using the four ribonucleoside triphosphates as substrates. This chain is DNA-directed RNA polymerase subunit beta, found in Coxiella burnetii (strain RSA 331 / Henzerling II).